The sequence spans 376 residues: Histidinol-phosphate aminotransferase 1 (376 aa).

An N6-(pyridoxal phosphate)lysine modification is found at Lys235.

It belongs to the class-II pyridoxal-phosphate-dependent aminotransferase family. Histidinol-phosphate aminotransferase subfamily. In terms of assembly, homodimer. Pyridoxal 5'-phosphate is required as a cofactor.

It carries out the reaction L-histidinol phosphate + 2-oxoglutarate = 3-(imidazol-4-yl)-2-oxopropyl phosphate + L-glutamate. It participates in amino-acid biosynthesis; L-histidine biosynthesis; L-histidine from 5-phospho-alpha-D-ribose 1-diphosphate: step 7/9. This chain is Histidinol-phosphate aminotransferase 1, found in Cupriavidus pinatubonensis (strain JMP 134 / LMG 1197) (Cupriavidus necator (strain JMP 134)).